Reading from the N-terminus, the 217-residue chain is MHIMEGYLPPEWAAFWYVFAIPFLVYGALRVKRIIEEKPSMKSLIAVSAGFIFVLSALKLPSVTGSCSHPTGTGIAVVFFGPAVTALLSAIVLLYQALLLAHGGITTLGANTASMGVIGPFVGWIAFKLLKNVNFRVAVFAAAMLSDLVTYVVTSLQLALAFPSSAGVAGIIKSAATFMGIFAVTQVPLSIIEGVVAVMLVSYIFEVRSDVLEVVKA.

The next 6 helical transmembrane spans lie at 8–28, 44–64, 74–94, 107–127, 139–161, and 181–201; these read LPPEWAAFWYVFAIPFLVYGA, LIAVSAGFIFVLSALKLPSVT, GIAVVFFGPAVTALLSAIVLL, TLGANTASMGVIGPFVGWIAF, VFAAAMLSDLVTYVVTSLQLALA, and IFAVTQVPLSIIEGVVAVMLV.

It belongs to the CbiM family. Forms an energy-coupling factor (ECF) transporter complex composed of an ATP-binding protein (A component, CbiO), a transmembrane protein (T component, CbiQ) and 2 possible substrate-capture proteins (S components, CbiM and CbiN) of unknown stoichimetry.

It localises to the cell membrane. It participates in cofactor biosynthesis; adenosylcobalamin biosynthesis. In terms of biological role, part of the energy-coupling factor (ECF) transporter complex CbiMNOQ involved in cobalt import. The protein is Putative cobalt transport protein CbiM of Archaeoglobus fulgidus (strain ATCC 49558 / DSM 4304 / JCM 9628 / NBRC 100126 / VC-16).